A 486-amino-acid chain; its full sequence is Mitogen-activated protein kinase 17 (486 aa).

Residues 16-307 form the Protein kinase domain; the sequence is YQIQEVVGKG…AEEALADPYF (292 aa). ATP contacts are provided by residues 22-30 and Lys-45; that span reads VGKGSYGVV. Asp-142 serves as the catalytic Proton acceptor. Residue Thr-178 is modified to Phosphothreonine. The short motif at 178–180 is the TXY element; that stretch reads TDY. Tyr-180 carries the phosphotyrosine modification. Phosphothreonine is present on Thr-183. The interval 386–455 is disordered; that stretch reads EEHNDDEEEH…LSSQKASQVD (70 aa). Over residues 422–433 the composition is skewed to low complexity; the sequence is SVHAQSSSASVV. A compositionally biased stretch (polar residues) spans 440 to 452; the sequence is PNTATGLSSQKAS.

Belongs to the protein kinase superfamily. CMGC Ser/Thr protein kinase family. MAP kinase subfamily. Dually phosphorylated on Thr-178 and Tyr-180, which activates the enzyme.

The enzyme catalyses L-seryl-[protein] + ATP = O-phospho-L-seryl-[protein] + ADP + H(+). It catalyses the reaction L-threonyl-[protein] + ATP = O-phospho-L-threonyl-[protein] + ADP + H(+). Activated by threonine and tyrosine phosphorylation. The chain is Mitogen-activated protein kinase 17 (MPK17) from Arabidopsis thaliana (Mouse-ear cress).